Here is a 217-residue protein sequence, read N- to C-terminus: Claudin-9 (217 aa).

The Cytoplasmic portion of the chain corresponds to 1–12; sequence MASTGLELLGMT. The chain crosses the membrane as a helical span at residues 13 to 33; that stretch reads LAVLGWLGTLVSCALPLWKVT. Residues 34–81 are Extracellular-facing; the sequence is AFIGNSIVVAQVVWEGLWMSCVVQSTGQMQCKVYDSLLALPQDLQAAR. Residues 82–102 traverse the membrane as a helical segment; it reads ALCVVALLLALLGLLVAITGA. Over 103–116 the chain is Cytoplasmic; it reads QCTTCVEDEGAKAR. Residues 117 to 137 form a helical membrane-spanning segment; the sequence is IVLTAGVLLLLSGILVLIPVC. Over 138–159 the chain is Extracellular; sequence WTAHAIIQDFYNPLVAEALKRE. A helical membrane pass occupies residues 160-180; sequence LGASLYLGWAAAALLMLGGGL. Over 181–217 the chain is Cytoplasmic; it reads LCCTCPPSHFERPRGPRLGYSIPSRSGASGLDKRDYV.

It belongs to the claudin family. Interacts with CLDN1, CD81 and OCLN.

The protein localises to the cell junction. It localises to the tight junction. Its subcellular location is the cell membrane. Functionally, plays a major role in tight junction-specific obliteration of the intercellular space, through calcium-independent cell-adhesion activity. This Mus musculus (Mouse) protein is Claudin-9 (Cldn9).